Consider the following 343-residue polypeptide: GTPase Obg (343 aa).

Residues 1-159 (MQFIDHATIC…RQLRLELKLL (159 aa)) form the Obg domain. The region spanning 160-328 (AEVGLIGLPN…LLRLVWQWLD (169 aa)) is the OBG-type G domain. Residues 166-173 (GLPNAGKS), 191-195 (FTTLV), 213-216 (DIPG), 280-283 (NKID), and 309-311 (SSA) contribute to the GTP site. Residues S173 and T193 each coordinate Mg(2+).

It belongs to the TRAFAC class OBG-HflX-like GTPase superfamily. OBG GTPase family. Monomer. Mg(2+) is required as a cofactor.

The protein resides in the cytoplasm. In terms of biological role, an essential GTPase which binds GTP, GDP and possibly (p)ppGpp with moderate affinity, with high nucleotide exchange rates and a fairly low GTP hydrolysis rate. Plays a role in control of the cell cycle, stress response, ribosome biogenesis and in those bacteria that undergo differentiation, in morphogenesis control. The chain is GTPase Obg from Synechococcus elongatus (strain ATCC 33912 / PCC 7942 / FACHB-805) (Anacystis nidulans R2).